Reading from the N-terminus, the 93-residue chain is Stromal cell-derived factor 1 (93 aa).

Residues 1–21 (MDAKVVAVLALVLAALCISDG) form the signal peptide. The Receptor activation motif motif lies at 22–23 (KP). A receptor and heparin binding region spans residues 29-33 (RCPCR). Intrachain disulfides connect Cys30–Cys55 and Cys32–Cys71. Receptor binding regions lie at residues 39 to 41 (IAR), 48 to 50 (KIL), and 60 to 70 (VARLKNNNRQV). Heparin-binding positions include 41–51 (RANVKHLKILN), Arg62, Gln69, and Lys85.

It belongs to the intercrine alpha (chemokine CxC) family. As to quaternary structure, monomer or homodimer; in equilibrium. Dimer formation is induced by non acidic pH and the presence of multivalent anions, and by binding to CXCR4 or heparin. Monomeric form is required for full chemotactic activity and resistance to ischemia/reperfusion injury, whereas the dimeric form acts as a partial agonist of CXCR4, stimulating Ca2+ mobilization but with no chemotactic activity and instead acts as a selective antagonist that blocks chemotaxis induced by the monomeric form. Interacts with the N-terminus of ACKR3. Interacts with integrin subunit ITGB3 (via the allosteric site (site 2)). Interacts with TNFAIP6 (via Link domain). As to expression, highest expression levels detected in kidney, liver, spleen and muscle. Isoform Alpha is expressed ubiquitously but at varying levels, while isoform Beta displays tissue-specific expression, with expression detected in kidney, liver, heart, spleen and muscle but not in lung, colon, brain, skin and stomach.

The protein resides in the secreted. Chemoattractant active on T-lymphocytes and monocytes but not neutrophils. Activates the C-X-C chemokine receptor CXCR4 to induce a rapid and transient rise in the level of intracellular calcium ions and chemotaxis. Also binds to atypical chemokine receptor ACKR3, which activates the beta-arrestin pathway and acts as a scavenger receptor for SDF-1. Binds to the allosteric site (site 2) of integrins and activates integrins ITGAV:ITGB3, ITGA4:ITGB1 and ITGA5:ITGB1 in a CXCR4-independent manner. Acts as a positive regulator of monocyte migration and a negative regulator of monocyte adhesion via the LYN kinase. Stimulates migration of monocytes and T-lymphocytes through its receptors, CXCR4 and ACKR3, and decreases monocyte adherence to surfaces coated with ICAM-1, a ligand for beta-2 integrins. SDF1A/CXCR4 signaling axis inhibits beta-2 integrin LFA-1 mediated adhesion of monocytes to ICAM-1 through LYN kinase. Plays a protective role after myocardial infarction. Induces down-regulation and internalization of ACKR3 expressed in various cells. Has several critical functions during embryonic development; required for B-cell lymphopoiesis, myelopoiesis in bone marrow and heart ventricular septum formation. Stimulates the proliferation of bone marrow-derived B-cell progenitors in the presence of IL7 as well as growth of stromal cell-dependent pre-B-cells. This is Stromal cell-derived factor 1 (Cxcl12) from Mus musculus (Mouse).